Here is an 810-residue protein sequence, read N- to C-terminus: Glycerol-3-phosphate acyltransferase (810 aa).

The short motif at 305–310 (CHRSHI) is the HXXXXD motif element.

This sequence belongs to the GPAT/DAPAT family.

The protein localises to the cell inner membrane. It catalyses the reaction sn-glycerol 3-phosphate + an acyl-CoA = a 1-acyl-sn-glycero-3-phosphate + CoA. It functions in the pathway phospholipid metabolism; CDP-diacylglycerol biosynthesis; CDP-diacylglycerol from sn-glycerol 3-phosphate: step 1/3. This chain is Glycerol-3-phosphate acyltransferase, found in Haemophilus influenzae (strain PittEE).